Consider the following 510-residue polypeptide: Photosystem II CP47 reaction center protein (510 aa).

Residues glycine 2–proline 16 lie on the Cytoplasmic side of the membrane. Residues glycine 17 to methionine 37 traverse the membrane as a helical segment. Topologically, residues alanine 38 to glutamate 94 are lumenal. A helical membrane pass occupies residues glycine 95–valine 116. Over tyrosine 117–aspartate 134 the chain is Cytoplasmic. A helical transmembrane segment spans residues leucine 135–histidine 157. The Lumenal portion of the chain corresponds to leucine 158 to glycine 196. Residues glycine 197–leucine 218 traverse the membrane as a helical segment. Residues valine 219–asparagine 233 are Cytoplasmic-facing. A helical transmembrane segment spans residues isoleucine 234–glycine 254. Topologically, residues threonine 255–tryptophan 450 are lumenal. A helical transmembrane segment spans residues phenylalanine 451–threonine 473. Residues leucine 474 to valine 510 lie on the Cytoplasmic side of the membrane.

In terms of assembly, PSII is composed of 1 copy each of membrane proteins PsbA, PsbB, PsbC, PsbD, PsbE, PsbF, PsbH, PsbI, PsbJ, PsbK, PsbL, PsbM, PsbT, PsbX, PsbY, PsbZ, Psb30/Ycf12, peripheral proteins PsbO, CyanoQ (PsbQ), PsbU, PsbV and a large number of cofactors. It forms dimeric complexes. Part of a photosystem II (PSII) assembly intermediate complex PSII-I; crystallized from a strain deleted of psbJ, it forms monomeric PSII before addition of the oxygen evolving complex. PSII-I includes 3 assembly factors not found in mature PSII (Psb27, Psb28 and Psb34). It depends on Binds multiple chlorophylls. PSII binds additional chlorophylls, carotenoids and specific lipids. as a cofactor.

It localises to the cellular thylakoid membrane. One of the components of the core complex of photosystem II (PSII). It binds chlorophyll and helps catalyze the primary light-induced photochemical processes of PSII. PSII is a light-driven water:plastoquinone oxidoreductase, using light energy to abstract electrons from H(2)O, generating O(2) and a proton gradient subsequently used for ATP formation. This chain is Photosystem II CP47 reaction center protein, found in Thermosynechococcus vestitus (strain NIES-2133 / IAM M-273 / BP-1).